The primary structure comprises 22 residues: Hemocyanin subunit 4 (22 aa).

It belongs to the tyrosinase family. Hemocyanin subfamily. As to expression, hemolymph.

The protein resides in the secreted. It localises to the extracellular space. Hemocyanins are copper-containing oxygen carriers occurring freely dissolved in the hemolymph of many mollusks and arthropods. The protein is Hemocyanin subunit 4 of Homarus americanus (American lobster).